The following is a 1104-amino-acid chain: Transient receptor potential cation channel subfamily M member 8 (1104 aa).

Residues 1-22 (MSFEGARLSMRSRRNGTMGSTR) are disordered. At 1 to 733 (MSFEGARLSM…LWYYVAFFTS (733 aa)) the chain is on the cytoplasmic side. A helical membrane pass occupies residues 734-758 (PFVVFSWNVVFYIAFLLLFAYVLLM). Topologically, residues 759-765 (DFHSVPH) are extracellular. Residues 766 to 789 (TPELILYALVFVLFCDEVRQWYMN) traverse the membrane as a helical segment. Residues Glu-782 and Gln-785 each contribute to the Ca(2+) site. Topologically, residues 790–796 (GVNYFTD) are cytoplasmic. Residues 797–817 (LWNVMDTLGLFYFIAGIVFRL) form a helical membrane-spanning segment. Ca(2+)-binding residues include Asn-799 and Asp-802. Over 818–822 (HSSNK) the chain is Extracellular. The chain crosses the membrane as a helical span at residues 823 to 848 (SSLYSGRVIFCLDYIIFTLRLIHIFT). Residues 849-853 (VSRNL) lie on the Cytoplasmic side of the membrane. A helical membrane pass occupies residues 854 to 890 (GPKIIMLQRMLIDVFFFLFLFAVWMVAFGVARQGILR). At 891-895 (QNEQR) the chain is on the extracellular side. An intramembrane region (pore-forming) is located at residues 896-912 (WRWIFRSVIYEPYLAMF). Topologically, residues 913-953 (GQVPSDVDSTTYDFSHCTFSGNESKPLCVELDEHNLPRFPE) are extracellular. Asn-934 is a glycosylation site (N-linked (GlcNAc...) (complex) asparagine). A helical transmembrane segment spans residues 954 to 984 (WITIPLVCIYMLSTNILLVNLLVAMFGYTVG). Over 985–1104 (IVQENNDQVW…LLKEIANNIK (120 aa)) the chain is Cytoplasmic. A coiled-coil region spans residues 1069–1104 (TKANDNSEEMRHRFRQLDSKLNDLKSLLKEIANNIK).

This sequence belongs to the transient receptor (TC 1.A.4) family. LTrpC subfamily. TRPM8 sub-subfamily. As to quaternary structure, homotetramer. Interacts (via N-terminus and C-terminus domains) with TCAF1; the interaction stimulates TRPM8 channel activity. Interacts (via N-terminus and C-terminus domains) with TCAF2; the interaction inhibits TRPM8 channel activity. N-glycosylation is not essential for but facilitates cell surface expression, multimerization, association with lipid rafts and ion channel activity. As to expression, expressed in dorsal root and trigeminal ganglia. Specifically expressed in a subset of pain- and temperature-sensing neurons. Not expressed in heavily myelinated neurons. Not expressed in neurons expressing TRPA1 or TRPV1.

The protein localises to the cell membrane. The protein resides in the membrane raft. The enzyme catalyses Ca(2+)(in) = Ca(2+)(out). It catalyses the reaction Na(+)(in) = Na(+)(out). It carries out the reaction K(+)(in) = K(+)(out). Activated by cold temperatures and by both natural and synthetic cooling compounds such as menthol and icilin. Activation of the channel requires the presence of PI(4,5)P2; PI(4,5)P2 is necessary to gate the channel. Activated by intracellular Ca(2+). In terms of biological role, non-selective ion channel permeable to monovalent and divalent cations, including Na(+), K(+), and Ca(2+), with higher permeability for Ca(2+). Activated by multiple factors, such as temperature, voltage, pressure, and changes in osmolality. Activated by cool temperatures (&lt;23-28 degrees Celsius) and by chemical ligands evoking a sensation of coolness, such as menthol and icilin, therefore plays a central role in the detection of environmental cold temperatures. TRPM8 is a voltage-dependent channel; its activation by cold or chemical ligands shifts its voltage thresholds towards physiological membrane potentials, leading to the opening of the channel. In addition to its critical role in temperature sensing, regulates basal tear secretion by sensing evaporation-induced cooling and changes in osmolality. This Mus musculus (Mouse) protein is Transient receptor potential cation channel subfamily M member 8 (Trpm8).